A 257-amino-acid chain; its full sequence is Glutamate racemase (257 aa).

Substrate-binding positions include 12–13 (DS) and 44–45 (YG). Cysteine 75 serves as the catalytic Proton donor/acceptor. 76-77 (NT) serves as a coordination point for substrate. Cysteine 185 serves as the catalytic Proton donor/acceptor. Residue 186–187 (TH) coordinates substrate.

It belongs to the aspartate/glutamate racemases family.

The enzyme catalyses L-glutamate = D-glutamate. It functions in the pathway cell wall biogenesis; peptidoglycan biosynthesis. Its function is as follows. Provides the (R)-glutamate required for cell wall biosynthesis. The polypeptide is Glutamate racemase (Clostridium botulinum (strain 657 / Type Ba4)).